The sequence spans 217 residues: Probable transaldolase (217 aa).

The active-site Schiff-base intermediate with substrate is the lysine 84.

It belongs to the transaldolase family. Type 3B subfamily.

It is found in the cytoplasm. The enzyme catalyses D-sedoheptulose 7-phosphate + D-glyceraldehyde 3-phosphate = D-erythrose 4-phosphate + beta-D-fructose 6-phosphate. The protein operates within carbohydrate degradation; pentose phosphate pathway; D-glyceraldehyde 3-phosphate and beta-D-fructose 6-phosphate from D-ribose 5-phosphate and D-xylulose 5-phosphate (non-oxidative stage): step 2/3. Transaldolase is important for the balance of metabolites in the pentose-phosphate pathway. The polypeptide is Probable transaldolase (Roseiflexus castenholzii (strain DSM 13941 / HLO8)).